A 168-amino-acid chain; its full sequence is Crossover junction endodeoxyribonuclease RuvC (168 aa).

Residues aspartate 11, glutamate 71, and aspartate 144 contribute to the active site. Mg(2+) is bound by residues aspartate 11, glutamate 71, and aspartate 144.

It belongs to the RuvC family. Homodimer which binds Holliday junction (HJ) DNA. The HJ becomes 2-fold symmetrical on binding to RuvC with unstacked arms; it has a different conformation from HJ DNA in complex with RuvA. In the full resolvosome a probable DNA-RuvA(4)-RuvB(12)-RuvC(2) complex forms which resolves the HJ. Mg(2+) serves as cofactor.

The protein localises to the cytoplasm. The enzyme catalyses Endonucleolytic cleavage at a junction such as a reciprocal single-stranded crossover between two homologous DNA duplexes (Holliday junction).. Its function is as follows. The RuvA-RuvB-RuvC complex processes Holliday junction (HJ) DNA during genetic recombination and DNA repair. Endonuclease that resolves HJ intermediates. Cleaves cruciform DNA by making single-stranded nicks across the HJ at symmetrical positions within the homologous arms, yielding a 5'-phosphate and a 3'-hydroxyl group; requires a central core of homology in the junction. The consensus cleavage sequence is 5'-(A/T)TT(C/G)-3'. Cleavage occurs on the 3'-side of the TT dinucleotide at the point of strand exchange. HJ branch migration catalyzed by RuvA-RuvB allows RuvC to scan DNA until it finds its consensus sequence, where it cleaves and resolves the cruciform DNA. The chain is Crossover junction endodeoxyribonuclease RuvC from Protochlamydia amoebophila (strain UWE25).